The following is a 914-amino-acid chain: Ral guanine nucleotide dissociation stimulator (914 aa).

In terms of domain architecture, N-terminal Ras-GEF spans 112-249 (KVRTVKAGTL…RAHLLLAQLE (138 aa)). Positions 280 to 365 (ARAPSPVPAP…APVPSLQPSW (86 aa)) are disordered. The segment covering 282 to 300 (APSPVPAPAPEPEPAPTPA) has biased composition (pro residues). Low complexity predominate over residues 304-338 (ELEVAPAPAPELQQAPEPAVGLESAPAPALELEPA). A Ras-GEF domain is found at 386–648 (PPDLVAEQFT…YNLSCELEPP (263 aa)). Disordered regions lie at residues 666–689 (KRWS…SKSC) and 728–776 (PESP…RTHK). 2 stretches are compositionally biased toward low complexity: residues 675 to 686 (STELSTSGSSHS) and 745 to 772 (SSPE…VAAT). Positions 798 to 885 (DCCIIRVSLD…YDFVLKKRTF (88 aa)) constitute a Ras-associating domain. Tyr-814 carries the post-translational modification Phosphotyrosine; by MET.

Interacts with RIT1 and RIT2. Interacts with OOG1. Interacts with TRAF3. Interacts with HRAS. In terms of processing, phosphorylation of Tyr-814 by MET blocks HRAS binding.

It localises to the cytoplasm. The protein resides in the nucleus. In terms of biological role, functions as a guanine nucleotide exchange factor (GEF) activating either RalA or RalB GTPases and plays an important role in intracellular transport. Interacts and acts as an effector molecule for R-Ras, H-Ras, K-Ras, and Rap. During bacterial clearance, recognizes 'Lys-33'-linked polyubiquitinated TRAF3 and subsequently mediates assembly of the exocyst complex. The chain is Ral guanine nucleotide dissociation stimulator (RALGDS) from Homo sapiens (Human).